Consider the following 734-residue polypeptide: Photosystem I P700 chlorophyll a apoprotein A2 (734 aa).

The next 8 membrane-spanning stretches (helical) occupy residues 46–69, 135–158, 175–199, 273–291, 330–353, 369–395, 417–439, and 517–535; these read IFAS…FHVA, LYTG…LHLQ, LNHH…HVAI, IAHH…GHMY, VHFQ…QHMY, AALY…IFFI, AIIS…LYVH, and FLVH…LILV. Positions 559 and 568 each coordinate [4Fe-4S] cluster. A run of 2 helical transmembrane segments spans residues 575-596 and 643-665; these read AFYL…YWHW and LSVW…MFLI. 3 residues coordinate chlorophyll a: histidine 654, methionine 662, and tyrosine 670. Tryptophan 671 is a phylloquinone binding site. Residues 707–727 traverse the membrane as a helical segment; the sequence is LVGLAHFSVGYIFTYAAFLIA.

This sequence belongs to the PsaA/PsaB family. As to quaternary structure, the PsaA/B heterodimer binds the P700 chlorophyll special pair and subsequent electron acceptors. PSI consists of a core antenna complex that captures photons, and an electron transfer chain that converts photonic excitation into a charge separation. The eukaryotic PSI reaction center is composed of at least 11 subunits. P700 is a chlorophyll a/chlorophyll a' dimer, A0 is one or more chlorophyll a, A1 is one or both phylloquinones and FX is a shared 4Fe-4S iron-sulfur center. serves as cofactor.

Its subcellular location is the plastid. It localises to the chloroplast thylakoid membrane. The catalysed reaction is reduced [plastocyanin] + hnu + oxidized [2Fe-2S]-[ferredoxin] = oxidized [plastocyanin] + reduced [2Fe-2S]-[ferredoxin]. Its function is as follows. PsaA and PsaB bind P700, the primary electron donor of photosystem I (PSI), as well as the electron acceptors A0, A1 and FX. PSI is a plastocyanin-ferredoxin oxidoreductase, converting photonic excitation into a charge separation, which transfers an electron from the donor P700 chlorophyll pair to the spectroscopically characterized acceptors A0, A1, FX, FA and FB in turn. Oxidized P700 is reduced on the lumenal side of the thylakoid membrane by plastocyanin. This Platanus occidentalis (Sycamore) protein is Photosystem I P700 chlorophyll a apoprotein A2.